We begin with the raw amino-acid sequence, 122 residues long: Small ribosomal subunit protein uS13 (122 aa).

The segment at 92-122 (HRKQLPVRGQRTHTNARTRKGKAKPIAGKKK) is disordered.

The protein belongs to the universal ribosomal protein uS13 family. Part of the 30S ribosomal subunit. Forms a loose heterodimer with protein S19. Forms two bridges to the 50S subunit in the 70S ribosome.

Functionally, located at the top of the head of the 30S subunit, it contacts several helices of the 16S rRNA. In the 70S ribosome it contacts the 23S rRNA (bridge B1a) and protein L5 of the 50S subunit (bridge B1b), connecting the 2 subunits; these bridges are implicated in subunit movement. Contacts the tRNAs in the A and P-sites. In Methylobacterium radiotolerans (strain ATCC 27329 / DSM 1819 / JCM 2831 / NBRC 15690 / NCIMB 10815 / 0-1), this protein is Small ribosomal subunit protein uS13.